The following is a 277-amino-acid chain: Large ribosomal subunit protein uL2 (277 aa).

The tract at residues Asp-199–Ser-277 is disordered.

This sequence belongs to the universal ribosomal protein uL2 family. As to quaternary structure, part of the 50S ribosomal subunit. Forms a bridge to the 30S subunit in the 70S ribosome.

In terms of biological role, one of the primary rRNA binding proteins. Required for association of the 30S and 50S subunits to form the 70S ribosome, for tRNA binding and peptide bond formation. It has been suggested to have peptidyltransferase activity; this is somewhat controversial. Makes several contacts with the 16S rRNA in the 70S ribosome. The protein is Large ribosomal subunit protein uL2 of Mesorhizobium japonicum (strain LMG 29417 / CECT 9101 / MAFF 303099) (Mesorhizobium loti (strain MAFF 303099)).